The sequence spans 402 residues: N-acetyllactosaminide beta-1,6-N-acetylglucosaminyl-transferase (402 aa).

At 1 to 7 (MMGSWKH) the chain is on the cytoplasmic side. Residues 8–23 (CLFSASLISALIFVFV) form a helical; Signal-anchor for type II membrane protein membrane-spanning segment. The Lumenal portion of the chain corresponds to 24–400 (YNTELWENKR…QSETAIQPSW (377 aa)). A glycan (N-linked (GlcNAc...) asparagine) is linked at asparagine 41.

Belongs to the glycosyltransferase 14 family. As to expression, expressed in lens epithelium cells. Expressed in reticulocytes.

The protein localises to the golgi apparatus membrane. It carries out the reaction a beta-D-Gal-(1-&gt;4)-beta-D-GlcNAc-(1-&gt;3)-beta-D-Gal-(1-&gt;4)-beta-D-GlcNAc derivative + UDP-N-acetyl-alpha-D-glucosamine = a beta-D-Gal-(1-&gt;4)-beta-D-GlcNAc-(1-&gt;3)-[beta-D-GlcNAc-(1-&gt;6)]-beta-D-Gal-(1-&gt;4)-N-acetyl-beta-D-glucosaminyl derivative + UDP + H(+). It functions in the pathway protein modification; protein glycosylation. In terms of biological role, branching enzyme that converts linear into branched poly-N-acetyllactosaminoglycans. Introduces the blood group I antigen during embryonic development. It is closely associated with the development and maturation of erythroid cells. Determines the expression of the blood group I antigen in erythrocytes. In Homo sapiens (Human), this protein is N-acetyllactosaminide beta-1,6-N-acetylglucosaminyl-transferase (GCNT2).